Reading from the N-terminus, the 436-residue chain is T-box transcription factor T (436 aa).

A DNA-binding region (T-box) is located at residues L51–D219.

In terms of assembly, monomer. Binds DNA as a monomer.

It localises to the nucleus. Functionally, involved in the transcriptional regulation of genes required for mesoderm formation and differentiation. Binds to a palindromic T site 5'-TTCACACCTAGGTGTGAA-3' DNA sequence and activates gene transcription when bound to such a site. This is T-box transcription factor T from Mus musculus (Mouse).